The chain runs to 728 residues: 1,4-alpha-glucan branching enzyme GlgB (728 aa).

Asp-405 acts as the Nucleophile in catalysis. Catalysis depends on Glu-458, which acts as the Proton donor.

This sequence belongs to the glycosyl hydrolase 13 family. GlgB subfamily. Monomer.

The catalysed reaction is Transfers a segment of a (1-&gt;4)-alpha-D-glucan chain to a primary hydroxy group in a similar glucan chain.. The protein operates within glycan biosynthesis; glycogen biosynthesis. Catalyzes the formation of the alpha-1,6-glucosidic linkages in glycogen by scission of a 1,4-alpha-linked oligosaccharide from growing alpha-1,4-glucan chains and the subsequent attachment of the oligosaccharide to the alpha-1,6 position. The sequence is that of 1,4-alpha-glucan branching enzyme GlgB from Shigella flexneri serotype 5b (strain 8401).